Reading from the N-terminus, the 142-residue chain is Large ribosomal subunit protein uL11 (142 aa).

The protein belongs to the universal ribosomal protein uL11 family. As to quaternary structure, part of the ribosomal stalk of the 50S ribosomal subunit. Interacts with L10 and the large rRNA to form the base of the stalk. L10 forms an elongated spine to which L12 dimers bind in a sequential fashion forming a multimeric L10(L12)X complex. Post-translationally, one or more lysine residues are methylated.

Its function is as follows. Forms part of the ribosomal stalk which helps the ribosome interact with GTP-bound translation factors. This chain is Large ribosomal subunit protein uL11, found in Edwardsiella ictaluri (strain 93-146).